Reading from the N-terminus, the 77-residue chain is Neurexophilin-4 (77 aa).

Positions 1–77 are v (Cys-rich); sequence NCHVEYEKTN…NFQSEHPYFG (77 aa).

It belongs to the neurexophilin family. May be proteolytically processed at the boundary between the N-terminal non-conserved and the central conserved domain in neuron-like cells.

Its subcellular location is the secreted. Its function is as follows. May be signaling molecules that resemble neuropeptides and that act by binding to alpha-neurexins and possibly other receptors. This is Neurexophilin-4 (NXPH4) from Macaca mulatta (Rhesus macaque).